The following is a 67-amino-acid chain: Metallothionein-A (67 aa).

The protein belongs to the metallothionein superfamily. Type 4 family.

Its function is as follows. Metallothioneins have a high content of cysteine residues that bind various heavy metals. The protein is Metallothionein-A of Sphaerechinus granularis (Purple sea urchin).